The primary structure comprises 210 residues: Dephospho-CoA kinase (210 aa).

A DPCK domain is found at 4–202; the sequence is WVGLTGGIGS…AFYSGIFASK (199 aa). 12 to 17 serves as a coordination point for ATP; it reads GSGKSA.

The protein belongs to the CoaE family.

The protein resides in the cytoplasm. It carries out the reaction 3'-dephospho-CoA + ATP = ADP + CoA + H(+). It functions in the pathway cofactor biosynthesis; coenzyme A biosynthesis; CoA from (R)-pantothenate: step 5/5. Its function is as follows. Catalyzes the phosphorylation of the 3'-hydroxyl group of dephosphocoenzyme A to form coenzyme A. This chain is Dephospho-CoA kinase, found in Neisseria meningitidis serogroup A / serotype 4A (strain DSM 15465 / Z2491).